Reading from the N-terminus, the 778-residue chain is LPS-assembly protein LptD (778 aa).

Positions 1 to 23 are cleaved as a signal peptide; that stretch reads MKTRYSVLSVAMTAAFYTQYAQA.

Belongs to the LptD family. As to quaternary structure, component of the lipopolysaccharide transport and assembly complex. Interacts with LptE and LptA.

It is found in the cell outer membrane. Together with LptE, is involved in the assembly of lipopolysaccharide (LPS) at the surface of the outer membrane. The protein is LPS-assembly protein LptD of Actinobacillus pleuropneumoniae serotype 5b (strain L20).